The following is a 159-amino-acid chain: MPLLNLVLDNGSRFVADVEKHSSIALWAPPEGGIEGNYQRRLRGIGYRTQIITAKGLGDISRFLLESHGVRPAHLGKKDKRVFTLPPELAIYMDTLPASAKGFVLWIIEGKVLSLFELESLVGLPAAVPKLKVIVEVGSDYNIRWMPLEQAVSKMAEGR.

This sequence belongs to the complex I NdhN subunit family. In terms of assembly, NDH-1 can be composed of about 15 different subunits; different subcomplexes with different compositions have been identified which probably have different functions.

It localises to the cell inner membrane. The catalysed reaction is a plastoquinone + NADH + (n+1) H(+)(in) = a plastoquinol + NAD(+) + n H(+)(out). The enzyme catalyses a plastoquinone + NADPH + (n+1) H(+)(in) = a plastoquinol + NADP(+) + n H(+)(out). NDH-1 shuttles electrons from an unknown electron donor, via FMN and iron-sulfur (Fe-S) centers, to quinones in the respiratory and/or the photosynthetic chain. The immediate electron acceptor for the enzyme in this species is believed to be plastoquinone. Couples the redox reaction to proton translocation, and thus conserves the redox energy in a proton gradient. Cyanobacterial NDH-1 also plays a role in inorganic carbon-concentration. This Gloeobacter violaceus (strain ATCC 29082 / PCC 7421) protein is NAD(P)H-quinone oxidoreductase subunit N.